Consider the following 80-residue polypeptide: Exodeoxyribonuclease 7 small subunit (80 aa).

This sequence belongs to the XseB family. As to quaternary structure, heterooligomer composed of large and small subunits.

It localises to the cytoplasm. It catalyses the reaction Exonucleolytic cleavage in either 5'- to 3'- or 3'- to 5'-direction to yield nucleoside 5'-phosphates.. Functionally, bidirectionally degrades single-stranded DNA into large acid-insoluble oligonucleotides, which are then degraded further into small acid-soluble oligonucleotides. In Halalkalibacterium halodurans (strain ATCC BAA-125 / DSM 18197 / FERM 7344 / JCM 9153 / C-125) (Bacillus halodurans), this protein is Exodeoxyribonuclease 7 small subunit.